The following is a 430-amino-acid chain: Signal recognition particle protein (430 aa).

GTP contacts are provided by residues 105–112 (GLQGSGKT), 187–191 (DTAGR), and 245–248 (TKLD).

Belongs to the GTP-binding SRP family. SRP54 subfamily. In terms of assembly, part of the signal recognition particle protein translocation system, which is composed of SRP and FtsY.

It localises to the cytoplasm. It catalyses the reaction GTP + H2O = GDP + phosphate + H(+). Its function is as follows. Involved in targeting and insertion of nascent membrane proteins into the cytoplasmic membrane. Binds to the hydrophobic signal sequence of the ribosome-nascent chain (RNC) as it emerges from the ribosomes. The SRP-RNC complex is then targeted to the cytoplasmic membrane where it interacts with the SRP receptor FtsY. This Thermus aquaticus protein is Signal recognition particle protein.